A 343-amino-acid polypeptide reads, in one-letter code: Tetraacyldisaccharide 4'-kinase (343 aa).

Residue 51 to 58 (HGGGAGKT) participates in ATP binding.

The protein belongs to the LpxK family.

The catalysed reaction is a lipid A disaccharide + ATP = a lipid IVA + ADP + H(+). Its pathway is glycolipid biosynthesis; lipid IV(A) biosynthesis; lipid IV(A) from (3R)-3-hydroxytetradecanoyl-[acyl-carrier-protein] and UDP-N-acetyl-alpha-D-glucosamine: step 6/6. In terms of biological role, transfers the gamma-phosphate of ATP to the 4'-position of a tetraacyldisaccharide 1-phosphate intermediate (termed DS-1-P) to form tetraacyldisaccharide 1,4'-bis-phosphate (lipid IVA). The polypeptide is Tetraacyldisaccharide 4'-kinase (Rhodopseudomonas palustris (strain BisB18)).